Reading from the N-terminus, the 128-residue chain is Protein SOB FIVE-LIKE 3 (128 aa).

Disordered stretches follow at residues 1-26 and 54-128; these read MERE…EEEE and KDSD…HKKK. Over residues 8–18 the composition is skewed to polar residues; that stretch reads SSESGWTTYIS. The SOFL-A signature appears at 11–16; the sequence is SGWTTY. An SOFL-B motif is present at residues 59–68; that stretch reads SMASDASSGP. Over residues 80 to 104 the composition is skewed to basic and acidic residues; that stretch reads REGLALRNGKGESNDVYSHRIDDKN. The short motif at 111–118 is the Nuclear localization signal element; that stretch reads RKKEKKKS.

This sequence belongs to the SOFL plant protein family. In terms of tissue distribution, expressed in seedlings, roots, flowers and siliques.

It localises to the cytoplasm. Its subcellular location is the nucleus. In terms of biological role, involved in cytokinin-mediated development. The sequence is that of Protein SOB FIVE-LIKE 3 from Arabidopsis thaliana (Mouse-ear cress).